Here is a 203-residue protein sequence, read N- to C-terminus: Probable cytochrome c oxidase subunit 3 (203 aa).

5 consecutive transmembrane segments (helical) span residues 30–50, 69–89, 102–122, 142–162, and 179–199; these read IIWLSSELMFFAGLFAMYFVA, LAVPVTAVLVASSFTCQMGVF, WYFITLLMGAFFVAGQGYEYY, ITTGFHGLHVIGGLIAFVFLL, and IVVSYYWHFVDIVWIGLFATI.

This sequence belongs to the cytochrome c oxidase subunit 3 family.

It localises to the cell membrane. It carries out the reaction 4 Fe(II)-[cytochrome c] + O2 + 8 H(+)(in) = 4 Fe(III)-[cytochrome c] + 2 H2O + 4 H(+)(out). The protein is Probable cytochrome c oxidase subunit 3 (ctaE) of Nocardia farcinica (strain IFM 10152).